The primary structure comprises 146 residues: Protein archease (146 aa).

Ca(2+) contacts are provided by aspartate 16, aspartate 145, and isoleucine 146.

It belongs to the archease family.

Functionally, activates the tRNA-splicing ligase complex by facilitating the enzymatic turnover of catalytic subunit RtcB. Acts by promoting the guanylylation of RtcB, a key intermediate step in tRNA ligation. Can also alter the NTP specificity of RtcB such that ATP, dGTP or ITP is used efficiently. This is Protein archease from Methanosarcina acetivorans (strain ATCC 35395 / DSM 2834 / JCM 12185 / C2A).